Consider the following 390-residue polypeptide: Chorismate synthase 1 (390 aa).

Residues arginine 39 and arginine 45 each contribute to the NADP(+) site. The tract at residues 95-117 (EQEEKEMKRKVTKPRPGHADLNG) is disordered. Residues 132–134 (RSS), 253–254 (NA), glycine 298, 313–317 (KPIPT), and arginine 339 each bind FMN.

Belongs to the chorismate synthase family. As to quaternary structure, homotetramer. It depends on FMNH2 as a cofactor.

The catalysed reaction is 5-O-(1-carboxyvinyl)-3-phosphoshikimate = chorismate + phosphate. It functions in the pathway metabolic intermediate biosynthesis; chorismate biosynthesis; chorismate from D-erythrose 4-phosphate and phosphoenolpyruvate: step 7/7. Catalyzes the anti-1,4-elimination of the C-3 phosphate and the C-6 proR hydrogen from 5-enolpyruvylshikimate-3-phosphate (EPSP) to yield chorismate, which is the branch point compound that serves as the starting substrate for the three terminal pathways of aromatic amino acid biosynthesis. This reaction introduces a second double bond into the aromatic ring system. This Bacillus cereus (strain ATCC 14579 / DSM 31 / CCUG 7414 / JCM 2152 / NBRC 15305 / NCIMB 9373 / NCTC 2599 / NRRL B-3711) protein is Chorismate synthase 1.